Here is a 109-residue protein sequence, read N- to C-terminus: Nucleoid-associated protein PC1_1077 (109 aa).

This sequence belongs to the YbaB/EbfC family. Homodimer.

It localises to the cytoplasm. The protein resides in the nucleoid. In terms of biological role, binds to DNA and alters its conformation. May be involved in regulation of gene expression, nucleoid organization and DNA protection. The sequence is that of Nucleoid-associated protein PC1_1077 from Pectobacterium carotovorum subsp. carotovorum (strain PC1).